A 907-amino-acid polypeptide reads, in one-letter code: Catenin alpha-1 (907 aa).

Residues valine 870–glutamine 879 show a composition bias toward basic and acidic residues. The disordered stretch occupies residues valine 870–valine 895. Residues lysine 882 to isoleucine 892 show a composition bias toward basic residues.

This sequence belongs to the vinculin/alpha-catenin family. In terms of assembly, interacts with ctnnb1, jupa and cdh2. Interacts with cdh1 during early stages of oogenesis, interaction is no longer present when oocyte develops into the unfertilized egg. Expressed in the skin (at protein level). Expressed in the ovary.

The protein resides in the cell junction. It is found in the adherens junction. Its subcellular location is the cytoplasm. The protein localises to the cytoskeleton. It localises to the cell membrane. The protein resides in the nucleus. In terms of biological role, associates with the cytoplasmic domain of a variety of cadherins, forming catenin and cadherin complexes which are further linked to the actin filament network and is thereby involved in cell-cell adhesion. Required for embryonic development, via maintenance of adherens junctions that facilitate the maintenance of the epithelial barrier. This Danio rerio (Zebrafish) protein is Catenin alpha-1.